A 562-amino-acid chain; its full sequence is Oxygen-dependent choline dehydrogenase (562 aa).

4–33 (DYIIIGAGSAGNVLATRLTEDPNTSVLLLE) contacts FAD. H473 functions as the Proton acceptor in the catalytic mechanism.

The protein belongs to the GMC oxidoreductase family. FAD serves as cofactor.

It localises to the cell membrane. The enzyme catalyses choline + A = betaine aldehyde + AH2. It carries out the reaction betaine aldehyde + NAD(+) + H2O = glycine betaine + NADH + 2 H(+). It functions in the pathway amine and polyamine biosynthesis; betaine biosynthesis via choline pathway; betaine aldehyde from choline (cytochrome c reductase route): step 1/1. Functionally, involved in the biosynthesis of the osmoprotectant glycine betaine. Catalyzes the oxidation of choline to betaine aldehyde and betaine aldehyde to glycine betaine at the same rate. The chain is Oxygen-dependent choline dehydrogenase from Escherichia coli O157:H7.